The chain runs to 426 residues: Neuromedin-U receptor 1 (426 aa).

Residues 1 to 65 are Extracellular-facing; it reads MTPLCLNCSV…QTELFMPICA (65 aa). 3 N-linked (GlcNAc...) asparagine glycosylation sites follow: Asn-7, Asn-27, and Asn-41. The chain crosses the membrane as a helical span at residues 66–86; sequence TYLLIFVVGAVGNGLTCLVIL. The Cytoplasmic segment spans residues 87–97; the sequence is RHKAMRTPTNY. A helical transmembrane segment spans residues 98–118; that stretch reads YLFSLAVSDLLVLLVGLPLEL. The Extracellular segment spans residues 119 to 138; that stretch reads YEMWHNYPFLLGVGGCYFRT. A disulfide bridge links Cys-134 with Cys-219. A helical transmembrane segment spans residues 139 to 161; sequence LLFEMVCLASVLNVTALSVERYV. Residues 162-181 are Cytoplasmic-facing; that stretch reads AVVHPLQARSMVTRAHVRRV. A helical transmembrane segment spans residues 182 to 202; it reads LGAVWGLAMLCSLPNTSLHGI. Over 203–235 the chain is Extracellular; the sequence is RQLHVPCRGPVPDSAVCMLVRPRALYNMVVQTT. A helical transmembrane segment spans residues 236 to 256; sequence ALLFFCLPMAIMSVLYLLIGL. Over 257–294 the chain is Cytoplasmic; sequence RLRRERLLLMQEAKGRGSAAARSRYTCRLQQHDRGRRQ. Residues 295-315 form a helical membrane-spanning segment; it reads VTKMLFVLVVVFGICWAPFHA. Topologically, residues 316-338 are extracellular; the sequence is DRVMWSVVSQWTDGLHLAFQHVH. Residues 339–359 traverse the membrane as a helical segment; sequence VISGIFFYLGSAANPVLYSLM. The Cytoplasmic portion of the chain corresponds to 360–426; sequence SSRFRETFQE…PEAQQETDPS (67 aa).

It belongs to the G-protein coupled receptor 1 family. Expressed in greatest abundance in peripheral organs, particularly in elements of the gastrointestinal and urogenital systems with highest levels in testes. In central nervous system structures express levels are much lower than those seen in peripheral organs. Within the CNS, has been detected in highest abundance in the cerebellum, dorsal root ganglia, hippocampus, and spinal cord.

It is found in the cell membrane. In terms of biological role, receptor for the neuromedin-U and neuromedin-S neuropeptides. This Homo sapiens (Human) protein is Neuromedin-U receptor 1 (NMUR1).